We begin with the raw amino-acid sequence, 142 residues long: Large ribosomal subunit protein uL11 (142 aa).

This sequence belongs to the universal ribosomal protein uL11 family. Part of the ribosomal stalk of the 50S ribosomal subunit. Interacts with L10 and the large rRNA to form the base of the stalk. L10 forms an elongated spine to which L12 dimers bind in a sequential fashion forming a multimeric L10(L12)X complex. In terms of processing, one or more lysine residues are methylated.

Forms part of the ribosomal stalk which helps the ribosome interact with GTP-bound translation factors. The protein is Large ribosomal subunit protein uL11 of Stenotrophomonas maltophilia (strain R551-3).